Here is a 481-residue protein sequence, read N- to C-terminus: UDP-N-acetylmuramoyl-L-alanyl-D-glutamate--L-lysine ligase (481 aa).

S42 provides a ligand contact to UDP-N-acetyl-alpha-D-muramoyl-L-alanyl-D-glutamate. 118–124 (GTKGKTT) is a binding site for ATP. UDP-N-acetyl-alpha-D-muramoyl-L-alanyl-D-glutamate is bound by residues N158, 160–161 (TT), S187, and R195. The residue at position 229 (K229) is an N6-carboxylysine. Positions 404–407 (DDPN) match the L-lysine recognition motif motif.

Belongs to the MurCDEF family. MurE subfamily. In terms of processing, carboxylation is probably crucial for Mg(2+) binding and, consequently, for the gamma-phosphate positioning of ATP.

Its subcellular location is the cytoplasm. The catalysed reaction is UDP-N-acetyl-alpha-D-muramoyl-L-alanyl-D-glutamate + L-lysine + ATP = UDP-N-acetyl-alpha-D-muramoyl-L-alanyl-gamma-D-glutamyl-L-lysine + ADP + phosphate + H(+). It participates in cell wall biogenesis; peptidoglycan biosynthesis. Functionally, catalyzes the addition of L-lysine to the nucleotide precursor UDP-N-acetylmuramoyl-L-alanyl-D-glutamate (UMAG) in the biosynthesis of bacterial cell-wall peptidoglycan. In Streptococcus thermophilus (strain ATCC BAA-491 / LMD-9), this protein is UDP-N-acetylmuramoyl-L-alanyl-D-glutamate--L-lysine ligase.